A 212-amino-acid chain; its full sequence is MTDAARARMLETQLIARGIRDAALLDAMGRVAREAFVPAEFAAEAYADGPLPIGAGQTISQPYIVALMIEALALRPGERVLEVGAGCGYAAAVLATMGARIFAIERHAALAEAARARLAALGLAVRLRVGDGHAGWPEAAPFDAILVSAAGSAVPEALKRQLAQGGRLVIPVGPPGGQTLLRLTRRGPERFESRDFGPVSFVPLLRGVGAAG.

Ser60 is a catalytic residue.

This sequence belongs to the methyltransferase superfamily. L-isoaspartyl/D-aspartyl protein methyltransferase family.

It is found in the cytoplasm. The catalysed reaction is [protein]-L-isoaspartate + S-adenosyl-L-methionine = [protein]-L-isoaspartate alpha-methyl ester + S-adenosyl-L-homocysteine. Functionally, catalyzes the methyl esterification of L-isoaspartyl residues in peptides and proteins that result from spontaneous decomposition of normal L-aspartyl and L-asparaginyl residues. It plays a role in the repair and/or degradation of damaged proteins. This chain is Protein-L-isoaspartate O-methyltransferase, found in Methylorubrum populi (strain ATCC BAA-705 / NCIMB 13946 / BJ001) (Methylobacterium populi).